The sequence spans 306 residues: Pantothenate kinase (306 aa).

91–98 is a binding site for ATP; the sequence is GSVAVGKS.

The protein belongs to the prokaryotic pantothenate kinase family.

The protein resides in the cytoplasm. It carries out the reaction (R)-pantothenate + ATP = (R)-4'-phosphopantothenate + ADP + H(+). It functions in the pathway cofactor biosynthesis; coenzyme A biosynthesis; CoA from (R)-pantothenate: step 1/5. This chain is Pantothenate kinase, found in Streptococcus pyogenes serotype M49 (strain NZ131).